The following is a 420-amino-acid chain: UDP-glucuronic acid decarboxylase 1 (420 aa).

Methionine 1 is subject to N-acetylmethionine. Topologically, residues 1 to 19 are cytoplasmic; that stretch reads MVSKALLRLVSAVNRRRMK. A helical; Signal-anchor for type II membrane protein membrane pass occupies residues 20–40; that stretch reads LLLGIALLAYVASVWGNFVNM. The Lumenal portion of the chain corresponds to 41–420; that stretch reads RSIQENGELK…RIKKGRTRHS (380 aa). Threonine 94 is modified (phosphothreonine). Positions 98, 99, 100, 119, 120, 122, 123, 124, 144, and 145 each coordinate NAD(+). UDP-alpha-D-glucuronate is bound by residues leucine 149 and tyrosine 150. Residues leucine 159 and serine 161 each coordinate NAD(+). Lysine 177 provides a ligand contact to UDP-alpha-D-glucuronate. Residue threonine 178 coordinates NAD(+). Residues asparagine 185, glycine 188, lysine 191, and arginine 192 each coordinate UDP-alpha-D-glucuronate. NAD(+) is bound by residues alanine 200, tyrosine 231, and lysine 235. Residue tyrosine 231 is the Proton acceptor of the active site. UDP-alpha-D-glucuronate-binding residues include tyrosine 245, glutamine 248, and glutamate 249. Positions 261, 267, and 272 each coordinate NAD(+). The N-linked (GlcNAc...) asparagine glycan is linked to asparagine 316.

The protein belongs to the NAD(P)-dependent epimerase/dehydratase family. UDP-glucuronic acid decarboxylase subfamily. In terms of assembly, homodimer and homotetramer. Interacts with AKT1. The cofactor is NAD(+).

The protein localises to the golgi apparatus. It is found in the golgi stack membrane. It catalyses the reaction UDP-alpha-D-glucuronate + H(+) = UDP-alpha-D-xylose + CO2. Its pathway is nucleotide-sugar biosynthesis; UDP-alpha-D-xylose biosynthesis; UDP-alpha-D-xylose from UDP-alpha-D-glucuronate: step 1/1. In terms of biological role, catalyzes the NAD-dependent decarboxylation of UDP-glucuronic acid to UDP-xylose. Necessary for the biosynthesis of the core tetrasaccharide in glycosaminoglycan biosynthesis. This is UDP-glucuronic acid decarboxylase 1 from Homo sapiens (Human).